The sequence spans 249 residues: Probable septum site-determining protein MinC (249 aa).

The tract at residues 115-144 is disordered; it reads PTAVSPPPPPPPPPARAEPAPPAARPAPGR. Residues 118-139 show a composition bias toward pro residues; the sequence is VSPPPPPPPPPARAEPAPPAAR.

This sequence belongs to the MinC family. Interacts with MinD and FtsZ.

In terms of biological role, cell division inhibitor that blocks the formation of polar Z ring septums. Rapidly oscillates between the poles of the cell to destabilize FtsZ filaments that have formed before they mature into polar Z rings. Prevents FtsZ polymerization. The sequence is that of Probable septum site-determining protein MinC from Xanthomonas axonopodis pv. citri (strain 306).